We begin with the raw amino-acid sequence, 211 residues long: uncharacterized protein (211 aa).

The stretch at 105–143 forms a coiled coil; that stretch reads IEENEFDKVRKSSDKLINEIEKTKSSLREDVKTALSEVR. Residues 191–211 traverse the membrane as a helical segment; it reads QWFTGFVGVVSSVVLIILFYF.

Belongs to the CCDC90 family.

Its subcellular location is the mitochondrion. The protein localises to the membrane. This is an uncharacterized protein from Schizosaccharomyces pombe (strain 972 / ATCC 24843) (Fission yeast).